The following is a 327-amino-acid chain: Gonadotropin-releasing hormone receptor (327 aa).

Over 1 to 38 (MANNASLEQDQNHCSAINNSIPLTQGKLPTLTLSGKIR) the chain is Extracellular. N-linked (GlcNAc...) asparagine glycans are attached at residues asparagine 4 and asparagine 18. The helical transmembrane segment at 39 to 58 (VTVTFFLFLLSTAFNASFLV) threads the bilayer. The Cytoplasmic portion of the chain corresponds to 59 to 77 (KLQRWTQKRKKGKKLSRMK). Residues 78–97 (VLLKHLTLANLLETLIVMPL) traverse the membrane as a helical segment. Residues 98-115 (DGMWNITVQWYAGEFLCK) are Extracellular-facing. N-linked (GlcNAc...) asparagine glycosylation is present at asparagine 102. A disulfide bond links cysteine 114 and cysteine 195. The chain crosses the membrane as a helical span at residues 116-137 (VLSYLKLFSMYAPAFMMVVISL). The Cytoplasmic segment spans residues 138–164 (DRSLAVTQPLAVQSKSKLERSMTSLAW). The chain crosses the membrane as a helical span at residues 165–184 (ILSIVFAGPQLYIFRMIYLA). The Extracellular portion of the chain corresponds to 185–211 (DGSGPAVFSQCVTHCSFPQWWHEAFYN). A helical membrane pass occupies residues 212-231 (FFTFSCLFIIPLLIMLICNA). The Cytoplasmic segment spans residues 232-280 (KIIFALTRVLHQDPRKLQLNQSKNNIPRARLRTLKMTVAFGTSFVICWT). Residues 281-299 (PYYVLGIWYWFDPEMLNRV) form a helical membrane-spanning segment. The Extracellular segment spans residues 300–305 (SEPVNH). A helical membrane pass occupies residues 306-325 (FFFLFAFLNPCFDPLIYGYF). Over 326–327 (SL) the chain is Cytoplasmic.

This sequence belongs to the G-protein coupled receptor 1 family.

It is found in the cell membrane. Its function is as follows. Receptor for gonadotropin releasing hormone (GnRH) that mediates the action of GnRH to stimulate the secretion of the gonadotropic hormones luteinizing hormone (LH) and follicle-stimulating hormone (FSH). This receptor mediates its action by association with G-proteins that activate a phosphatidylinositol-calcium second messenger system. The protein is Gonadotropin-releasing hormone receptor (Gnrhr) of Rattus norvegicus (Rat).